Reading from the N-terminus, the 146-residue chain is MSIPEITQTLLQAKKDKGLSFADLEATLGRDEVCIAALFYRQASASEEEAKLLVEALGLDSSYIKHLTEYPVKGLGPVVPTDPLIYRFYEIMQVYGFPIKEVIQEKFGDGIMSAIDFTLDVEKEADPKGDRVKITMSGKFLPYKKW.

Catalysis depends on residues R87, E90, and S113.

The protein belongs to the cyanase family.

It catalyses the reaction cyanate + hydrogencarbonate + 3 H(+) = NH4(+) + 2 CO2. Functionally, catalyzes the reaction of cyanate with bicarbonate to produce ammonia and carbon dioxide. In Nostoc sp. (strain PCC 7120 / SAG 25.82 / UTEX 2576), this protein is Cyanate hydratase.